The sequence spans 457 residues: Siroheme synthase (457 aa).

The segment at methionine 1–threonine 204 is precorrin-2 dehydrogenase /sirohydrochlorin ferrochelatase. Residues aspartate 22–valine 23 and leucine 43–alanine 44 contribute to the NAD(+) site. The residue at position 128 (serine 128) is a Phosphoserine. Positions glycine 216–histidine 457 are uroporphyrinogen-III C-methyltransferase. Proline 225 contacts S-adenosyl-L-methionine. Aspartate 248 functions as the Proton acceptor in the catalytic mechanism. Lysine 270 acts as the Proton donor in catalysis. S-adenosyl-L-methionine is bound by residues glycine 301–aspartate 303, isoleucine 306, threonine 331–alanine 332, methionine 382, and glycine 411.

This sequence in the N-terminal section; belongs to the precorrin-2 dehydrogenase / sirohydrochlorin ferrochelatase family. The protein in the C-terminal section; belongs to the precorrin methyltransferase family.

It carries out the reaction uroporphyrinogen III + 2 S-adenosyl-L-methionine = precorrin-2 + 2 S-adenosyl-L-homocysteine + H(+). It catalyses the reaction precorrin-2 + NAD(+) = sirohydrochlorin + NADH + 2 H(+). The enzyme catalyses siroheme + 2 H(+) = sirohydrochlorin + Fe(2+). It functions in the pathway cofactor biosynthesis; adenosylcobalamin biosynthesis; precorrin-2 from uroporphyrinogen III: step 1/1. It participates in cofactor biosynthesis; adenosylcobalamin biosynthesis; sirohydrochlorin from precorrin-2: step 1/1. Its pathway is porphyrin-containing compound metabolism; siroheme biosynthesis; precorrin-2 from uroporphyrinogen III: step 1/1. The protein operates within porphyrin-containing compound metabolism; siroheme biosynthesis; siroheme from sirohydrochlorin: step 1/1. It functions in the pathway porphyrin-containing compound metabolism; siroheme biosynthesis; sirohydrochlorin from precorrin-2: step 1/1. Functionally, multifunctional enzyme that catalyzes the SAM-dependent methylations of uroporphyrinogen III at position C-2 and C-7 to form precorrin-2 via precorrin-1. Then it catalyzes the NAD-dependent ring dehydrogenation of precorrin-2 to yield sirohydrochlorin. Finally, it catalyzes the ferrochelation of sirohydrochlorin to yield siroheme. The polypeptide is Siroheme synthase (Escherichia coli O6:K15:H31 (strain 536 / UPEC)).